Here is a 310-residue protein sequence, read N- to C-terminus: ADP-L-glycero-D-manno-heptose-6-epimerase (310 aa).

Residues 10-11 (FI), 31-32 (DN), Lys38, Lys53, 75-79 (EGACS), and Asn92 contribute to the NADP(+) site. Tyr140 functions as the Proton acceptor in the catalytic mechanism. Lys144 serves as a coordination point for NADP(+). Asn169 is a substrate binding site. Val170 and Lys178 together coordinate NADP(+). Lys178 functions as the Proton acceptor in the catalytic mechanism. Substrate contacts are provided by residues Ser180, His187, 201-204 (FEGS), Arg209, and Tyr272.

The protein belongs to the NAD(P)-dependent epimerase/dehydratase family. HldD subfamily. Homopentamer. NADP(+) serves as cofactor.

It carries out the reaction ADP-D-glycero-beta-D-manno-heptose = ADP-L-glycero-beta-D-manno-heptose. Its pathway is nucleotide-sugar biosynthesis; ADP-L-glycero-beta-D-manno-heptose biosynthesis; ADP-L-glycero-beta-D-manno-heptose from D-glycero-beta-D-manno-heptose 7-phosphate: step 4/4. Functionally, catalyzes the interconversion between ADP-D-glycero-beta-D-manno-heptose and ADP-L-glycero-beta-D-manno-heptose via an epimerization at carbon 6 of the heptose. This Cronobacter sakazakii (strain ATCC BAA-894) (Enterobacter sakazakii) protein is ADP-L-glycero-D-manno-heptose-6-epimerase.